The sequence spans 140 residues: Nucleoside diphosphate kinase (140 aa).

The ATP site is built by lysine 11, phenylalanine 59, arginine 87, threonine 93, arginine 104, and asparagine 114. Histidine 117 (pros-phosphohistidine intermediate) is an active-site residue.

Belongs to the NDK family. In terms of assembly, homotetramer. It depends on Mg(2+) as a cofactor.

It is found in the cytoplasm. It carries out the reaction a 2'-deoxyribonucleoside 5'-diphosphate + ATP = a 2'-deoxyribonucleoside 5'-triphosphate + ADP. It catalyses the reaction a ribonucleoside 5'-diphosphate + ATP = a ribonucleoside 5'-triphosphate + ADP. Its function is as follows. Major role in the synthesis of nucleoside triphosphates other than ATP. The ATP gamma phosphate is transferred to the NDP beta phosphate via a ping-pong mechanism, using a phosphorylated active-site intermediate. This Brucella anthropi (strain ATCC 49188 / DSM 6882 / CCUG 24695 / JCM 21032 / LMG 3331 / NBRC 15819 / NCTC 12168 / Alc 37) (Ochrobactrum anthropi) protein is Nucleoside diphosphate kinase.